Here is a 45-residue protein sequence, read N- to C-terminus: uncharacterized protein (45 aa).

A helical membrane pass occupies residues 15-37; it reads EVVGTLMAVLITFALVAVVFNFI.

It localises to the membrane. This is an uncharacterized protein from Archaeoglobus fulgidus (strain ATCC 49558 / DSM 4304 / JCM 9628 / NBRC 100126 / VC-16).